The chain runs to 99 residues: MDFSKMGELLNQVQEKAKNIELELANREFSAKSGAGLVKVSANGKGEIIDVSIDDSLLEDKESLQILLISAINDVLAMVAQNRSSMANDVLGGFGGMKL.

This sequence belongs to the YbaB/EbfC family. As to quaternary structure, homodimer.

Its subcellular location is the cytoplasm. It localises to the nucleoid. In terms of biological role, binds to DNA and alters its conformation. May be involved in regulation of gene expression, nucleoid organization and DNA protection. The protein is Nucleoid-associated protein Cj1642 of Campylobacter jejuni subsp. jejuni serotype O:2 (strain ATCC 700819 / NCTC 11168).